The chain runs to 309 residues: tRNA dimethylallyltransferase (309 aa).

Residue 13–20 (GPTAVGKS) coordinates ATP. Position 15–20 (15–20 (TAVGKS)) interacts with substrate.

Belongs to the IPP transferase family. As to quaternary structure, monomer. Mg(2+) is required as a cofactor.

It catalyses the reaction adenosine(37) in tRNA + dimethylallyl diphosphate = N(6)-dimethylallyladenosine(37) in tRNA + diphosphate. Catalyzes the transfer of a dimethylallyl group onto the adenine at position 37 in tRNAs that read codons beginning with uridine, leading to the formation of N6-(dimethylallyl)adenosine (i(6)A). This chain is tRNA dimethylallyltransferase, found in Lacticaseibacillus casei (strain BL23) (Lactobacillus casei).